A 182-amino-acid chain; its full sequence is ATP synthase subunit b (182 aa).

Residues 25–45 form a helical membrane-spanning segment; sequence VVLAGFAVLFYIVVKFVVPMF.

It belongs to the ATPase B chain family. In terms of assembly, F-type ATPases have 2 components, F(1) - the catalytic core - and F(0) - the membrane proton channel. F(1) has five subunits: alpha(3), beta(3), gamma(1), delta(1), epsilon(1). F(0) has three main subunits: a(1), b(2) and c(10-14). The alpha and beta chains form an alternating ring which encloses part of the gamma chain. F(1) is attached to F(0) by a central stalk formed by the gamma and epsilon chains, while a peripheral stalk is formed by the delta and b chains.

Its subcellular location is the cell membrane. In terms of biological role, f(1)F(0) ATP synthase produces ATP from ADP in the presence of a proton or sodium gradient. F-type ATPases consist of two structural domains, F(1) containing the extramembraneous catalytic core and F(0) containing the membrane proton channel, linked together by a central stalk and a peripheral stalk. During catalysis, ATP synthesis in the catalytic domain of F(1) is coupled via a rotary mechanism of the central stalk subunits to proton translocation. Functionally, component of the F(0) channel, it forms part of the peripheral stalk, linking F(1) to F(0). This is ATP synthase subunit b from Arthrobacter sp. (strain FB24).